A 340-amino-acid polypeptide reads, in one-letter code: Uroporphyrinogen decarboxylase (340 aa).

Residues 21 to 25, Asp-71, Tyr-148, Ser-203, and His-316 each bind substrate; that span reads RQAGR.

Belongs to the uroporphyrinogen decarboxylase family. Homodimer.

The protein localises to the cytoplasm. The enzyme catalyses uroporphyrinogen III + 4 H(+) = coproporphyrinogen III + 4 CO2. It participates in porphyrin-containing compound metabolism; protoporphyrin-IX biosynthesis; coproporphyrinogen-III from 5-aminolevulinate: step 4/4. Functionally, catalyzes the decarboxylation of four acetate groups of uroporphyrinogen-III to yield coproporphyrinogen-III. This is Uroporphyrinogen decarboxylase from Campylobacter concisus (strain 13826).